The primary structure comprises 244 residues: 1-(5-phosphoribosyl)-5-[(5-phosphoribosylamino)methylideneamino] imidazole-4-carboxamide isomerase (244 aa).

D11 acts as the Proton acceptor in catalysis. Residue D132 is the Proton donor of the active site.

The protein belongs to the HisA/HisF family.

The protein resides in the cytoplasm. It catalyses the reaction 1-(5-phospho-beta-D-ribosyl)-5-[(5-phospho-beta-D-ribosylamino)methylideneamino]imidazole-4-carboxamide = 5-[(5-phospho-1-deoxy-D-ribulos-1-ylimino)methylamino]-1-(5-phospho-beta-D-ribosyl)imidazole-4-carboxamide. It participates in amino-acid biosynthesis; L-histidine biosynthesis; L-histidine from 5-phospho-alpha-D-ribose 1-diphosphate: step 4/9. The polypeptide is 1-(5-phosphoribosyl)-5-[(5-phosphoribosylamino)methylideneamino] imidazole-4-carboxamide isomerase (Sphingopyxis alaskensis (strain DSM 13593 / LMG 18877 / RB2256) (Sphingomonas alaskensis)).